We begin with the raw amino-acid sequence, 612 residues long: MMSYEQQQYLTQQQQMNNFTNLTNLTNMNSVNHNFGLMQQQQLVPQQPQLAPPPPPQHQQIPISTQSTPNSTSSTTTTTTTTTSTTTAPTSNSKKSKTTPSNGNKPTSGMVTPIISTPLQLSSVNTPLQQYQPNSQLQPPSPIIKKSSLSTTPNNINNNNNNNNNTNTISPKTKGGNNSAPTPTYSSATINSPYLEVIEQESISVENVIINNRNSNVHIVVKNTSFVLKIRSLDLNKINFSSSCVKAGLYYVNEPLKEVSFIQNPPITYVGSSCKNGEQFAIDIKISILSSQHQGNLFYIMVHVSPENQKSITKDGKEAIVPTTSSTSTSSSATSTTSSSTSSTTTTSSTSNSSTPGSTMGCINGGNSILSFPIRVVSKVDHIKKDPNGVCEKKQTFIDILTDRLSSLENLHLTQSALLSNMLKERGIPESEYSFSEYSEPELISCAFSTSPPSSPFSISGGGGSGGIPSQSGIIKKHKKPSGSSGYGDNKNTAERFLECFNRVIKVYKEHYGKKSFELSKFISSLDNDEKNILVDLLESFTFDESSQVKSLDNNDHCEDCNCETCPYKQQAEQFMLLSPVICFPSPAIKSSNNTNNTNNTNNTNNNTVVTI.

Disordered regions lie at residues 46–113, 129–185, 313–360, 457–488, and 593–612; these read QQPQ…MVTP, QQYQ…TPTY, TKDG…GSTM, FSISGGGGSGGIPSQSGIIKKHKKPSGSSGYG, and NNTNNTNNTNNTNNNTVVTI. The segment covering 58–102 has biased composition (low complexity); it reads HQQIPISTQSTPNSTSSTTTTTTTTTSTTTAPTSNSKKSKTTPSN. Composition is skewed to polar residues over residues 103–113 and 129–138; these read GNKPTSGMVTP and QQYQPNSQLQ. A compositionally biased stretch (low complexity) spans 143–169; the sequence is IIKKSSLSTTPNNINNNNNNNNNTNTI. The segment covering 175 to 185 has biased composition (polar residues); that stretch reads GGNNSAPTPTY. The segment covering 323-359 has biased composition (low complexity); the sequence is TTSSTSTSSSATSTTSSSTSSTTTTSSTSNSSTPGST.

This is an uncharacterized protein from Dictyostelium discoideum (Social amoeba).